The chain runs to 134 residues: uncharacterized protein (134 aa).

The helical transmembrane segment at 13-35 (FFIAFSAYLVVILLMTAVSVYYL) threads the bilayer.

The protein resides in the membrane. This is an uncharacterized protein from Archaeoglobus fulgidus (strain ATCC 49558 / DSM 4304 / JCM 9628 / NBRC 100126 / VC-16).